The following is a 153-amino-acid chain: Phosphopantetheine adenylyltransferase (153 aa).

Ser-11 contacts substrate. ATP contacts are provided by residues 11–12 (SF) and His-19. 3 residues coordinate substrate: Lys-43, Thr-75, and Arg-89. ATP-binding positions include 90-92 (GIR), Glu-100, and 124-130 (LSFISSS).

The protein belongs to the bacterial CoaD family. In terms of assembly, homohexamer. The cofactor is Mg(2+).

It is found in the cytoplasm. It carries out the reaction (R)-4'-phosphopantetheine + ATP + H(+) = 3'-dephospho-CoA + diphosphate. Its pathway is cofactor biosynthesis; coenzyme A biosynthesis; CoA from (R)-pantothenate: step 4/5. Reversibly transfers an adenylyl group from ATP to 4'-phosphopantetheine, yielding dephospho-CoA (dPCoA) and pyrophosphate. The sequence is that of Phosphopantetheine adenylyltransferase from Porphyromonas gingivalis (strain ATCC 33277 / DSM 20709 / CIP 103683 / JCM 12257 / NCTC 11834 / 2561).